The primary structure comprises 98 residues: Endoribonuclease antitoxin GhoS (98 aa).

As to quaternary structure, monomer. Post-translationally, unlike other TA antitoxins, this protein is stable.

Functionally, antitoxin component of a type V toxin-antitoxin (TA) system. Neutralizes the toxic effects of toxin GhoT by digesting ghoT transcripts in a sequence-specific manner. In concert with GhoT is involved in reducing cell growth during antibacterial stress. This chain is Endoribonuclease antitoxin GhoS, found in Escherichia coli O157:H7.